A 46-amino-acid chain; its full sequence is Toxin PhcrTx2 (46 aa).

3 disulfide bridges follow: C4–C40, C6–C32, and C22–C41.

It belongs to the sea anemone type 3 (BDS) potassium channel toxin family.

Its subcellular location is the secreted. The protein localises to the nematocyst. Functionally, neurotoxin that induces paralysis (but not death) to U.thayeri crabs. Partially and reversibly inhibits glutamate-evoked peak currents (IC(50)=4.7 uM) but not voltage-gated potassium channel currents in cultured isolated neurons from the land snail H.aspersa. Weakly inhibits voltage-gated potassium peak currents (IC(50)=6.4 uM) and steady-state currents (IC(50)=8.2 uM) in rat dorsal root ganglion (DRG) neurons. Weakly inhibits voltage-gated sodium currents in rat DRG neurons (IC(50)=0.9 uM). This Phymanthus crucifer (Red beaded anemone) protein is Toxin PhcrTx2.